The chain runs to 149 residues: Large ribosomal subunit protein bL9 (149 aa).

This sequence belongs to the bacterial ribosomal protein bL9 family.

In terms of biological role, binds to the 23S rRNA. The chain is Large ribosomal subunit protein bL9 from Salinibacter ruber (strain DSM 13855 / M31).